The chain runs to 292 residues: Elongation factor Ts (292 aa).

The interval 80–83 (TDFV) is involved in Mg(2+) ion dislocation from EF-Tu.

It belongs to the EF-Ts family.

Its subcellular location is the cytoplasm. Associates with the EF-Tu.GDP complex and induces the exchange of GDP to GTP. It remains bound to the aminoacyl-tRNA.EF-Tu.GTP complex up to the GTP hydrolysis stage on the ribosome. The sequence is that of Elongation factor Ts from Pediococcus pentosaceus (strain ATCC 25745 / CCUG 21536 / LMG 10740 / 183-1w).